Here is a 58-residue protein sequence, read N- to C-terminus: Sperm histone P2b (58 aa).

The disordered stretch occupies residues L20–H41.

This sequence belongs to the protamine P2 family. As to expression, testis.

Its subcellular location is the nucleus. The protein localises to the chromosome. Its function is as follows. Protamines substitute for histones in the chromatin of sperm during the haploid phase of spermatogenesis. They compact sperm DNA into a highly condensed, stable and inactive complex. The chain is Sperm histone P2b from Equus caballus (Horse).